The primary structure comprises 815 residues: Bifunctional aspartokinase/homoserine dehydrogenase (815 aa).

Residues 1–249 form an aspartokinase region; it reads MRVLKFGGTS…VPDARLLPTL (249 aa). The segment at 250–470 is interface; that stretch reads SYREAMELSY…NNKKVVDMFL (221 aa). 2 consecutive ACT domains span residues 320–392 and 401–478; these read VSGP…PIEV and VVGD…GVGG. The segment at 471–815 is homoserine dehydrogenase; it reads VGVGGVGGEL…FADILRTLQH (345 aa). NAD(+) contacts are provided by V473, G475, V476, A504, and T555. Position 476 (V476) interacts with NADP(+). V476 contacts NADPH. T555 is a binding site for NADP(+). T555, S556, and K579 together coordinate NADPH. K579 provides a ligand contact to NADP(+). Positions 606, 609, 611, and 613 each coordinate Na(+). G664 and E667 together coordinate NADP(+). Residues E667 and D678 each contribute to the L-homoserine site. Catalysis depends on K682, which acts as the Proton donor. G797 is an NAD(+) binding site. G797 serves as a coordination point for NADP(+). G797 provides a ligand contact to NADPH.

It in the N-terminal section; belongs to the aspartokinase family. This sequence in the C-terminal section; belongs to the homoserine dehydrogenase family. As to quaternary structure, homotetramer. A metal cation is required as a cofactor.

The catalysed reaction is L-homoserine + NADP(+) = L-aspartate 4-semialdehyde + NADPH + H(+). The enzyme catalyses L-homoserine + NAD(+) = L-aspartate 4-semialdehyde + NADH + H(+). It catalyses the reaction L-aspartate + ATP = 4-phospho-L-aspartate + ADP. The protein operates within amino-acid biosynthesis; L-lysine biosynthesis via DAP pathway; (S)-tetrahydrodipicolinate from L-aspartate: step 1/4. It functions in the pathway amino-acid biosynthesis; L-methionine biosynthesis via de novo pathway; L-homoserine from L-aspartate: step 1/3. It participates in amino-acid biosynthesis; L-methionine biosynthesis via de novo pathway; L-homoserine from L-aspartate: step 3/3. Its pathway is amino-acid biosynthesis; L-threonine biosynthesis; L-threonine from L-aspartate: step 1/5. The protein operates within amino-acid biosynthesis; L-threonine biosynthesis; L-threonine from L-aspartate: step 3/5. Bifunctional aspartate kinase and homoserine dehydrogenase that catalyzes the first and the third steps toward the synthesis of lysine, methionine and threonine from aspartate. The chain is Bifunctional aspartokinase/homoserine dehydrogenase (thrA) from Haemophilus influenzae (strain ATCC 51907 / DSM 11121 / KW20 / Rd).